The sequence spans 502 residues: Glycerol kinase (502 aa).

T14 is a binding site for ADP. The ATP site is built by T14, T15, and S16. T14 lines the sn-glycerol 3-phosphate pocket. ADP is bound at residue R18. Residues R84, E85, and Y136 each contribute to the sn-glycerol 3-phosphate site. 3 residues coordinate glycerol: R84, E85, and Y136. A Phosphohistidine; by HPr modification is found at H232. Position 246 (D246) interacts with sn-glycerol 3-phosphate. Residues D246 and Q247 each contribute to the glycerol site. Residues T268 and G311 each coordinate ADP. ATP contacts are provided by T268, G311, Q315, and G412. ADP is bound by residues G412 and N416.

Belongs to the FGGY kinase family. As to quaternary structure, homotetramer and homodimer (in equilibrium). The phosphoenolpyruvate-dependent sugar phosphotransferase system (PTS), including enzyme I, and histidine-containing protein (HPr) are required for the phosphorylation, which leads to the activation of the enzyme.

It catalyses the reaction glycerol + ATP = sn-glycerol 3-phosphate + ADP + H(+). It participates in polyol metabolism; glycerol degradation via glycerol kinase pathway; sn-glycerol 3-phosphate from glycerol: step 1/1. Its activity is regulated as follows. Activated by phosphorylation and inhibited by fructose 1,6-bisphosphate (FBP). Key enzyme in the regulation of glycerol uptake and metabolism. Catalyzes the phosphorylation of glycerol to yield sn-glycerol 3-phosphate. The protein is Glycerol kinase of Streptococcus pneumoniae (strain Hungary19A-6).